Consider the following 334-residue polypeptide: Large ribosomal subunit protein uL3 (334 aa).

Residues 1 to 10 (MGMKKSRPRR) show a composition bias toward basic residues. The interval 1 to 20 (MGMKKSRPRRGSLAFSPRKR) is disordered.

This sequence belongs to the universal ribosomal protein uL3 family. As to quaternary structure, part of the 50S ribosomal subunit. Forms a cluster with proteins L14 and L24e.

Functionally, one of the primary rRNA binding proteins, it binds directly near the 3'-end of the 23S rRNA, where it nucleates assembly of the 50S subunit. In Methanococcus maripaludis (strain C7 / ATCC BAA-1331), this protein is Large ribosomal subunit protein uL3.